The primary structure comprises 1533 residues: Actin cytoskeleton-regulatory complex protein pan-1 (1533 aa).

The disordered stretch occupies residues 1-204; sequence MYSNSNAFLG…PPPPVKPQAT (204 aa). Composition is skewed to low complexity over residues 19–46, 53–136, 143–170, and 177–193; these read QQPQ…QPTG, GFAP…FQTG, IPQQ…QPQP, and QIQA…QGGI. In terms of domain architecture, EH 1 spans 244–333; the sequence is DQARFETLFK…DHIKNEVSSM (90 aa). The region spanning 277 to 312 is the EF-hand 1 domain; it reads LDGDSLSQIWTLADTTRSGQLHFPEFALAMYLCNLK. The span at 345–359 shows a compositional bias: low complexity; it reads AGSSSAPASNAPSFA. Disordered stretches follow at residues 345-378 and 393-423; these read AGSS…PQPS and QQTG…GYAG. Composition is skewed to polar residues over residues 360–378 and 393–410; these read TQQN…PQPS and QQTG…QQTG. An EH 2 domain is found at 513 to 602; that stretch reads EKTRYDALFR…PELVPPSARN (90 aa). The EF-hand 2 domain maps to 546–581; that stretch reads LDKPDLERIWTLADNGNKGRLDLDEFAVAMHLIYRK. The segment covering 649–664 has biased composition (basic and acidic residues); it reads NRKDATVFKNNDEEVG. Disordered regions lie at residues 649–691, 894–917, 935–1306, and 1334–1533; these read NRKD…GDDL, IEDS…WEDA, SRAA…STNP, and DAIS…RVLD. Positions 690-890 form a coiled coil; the sequence is DLTIEQLRKK…RDVEDSVREF (201 aa). Basic and acidic residues-rich tracts occupy residues 894 to 916 and 935 to 947; these read IEDS…RWED and SRAA…DRQG. Low complexity predominate over residues 968 to 982; that stretch reads TPSPSISRTSTPAST. Residues 1026-1209 adopt a coiled-coil conformation; sequence ETAAQRAERE…KQLEAIDDED (184 aa). 3 stretches are compositionally biased toward basic and acidic residues: residues 1031–1063, 1090–1164, and 1173–1203; these read RAER…KLAE, GKAD…EEEK, and EAKE…KQLE. Positions 1204 to 1218 are enriched in acidic residues; it reads AIDDEDSSSSDEEGP. Polar residues predominate over residues 1221 to 1237; sequence ITPQASTPTVGGSQVGT. Positions 1279–1293 are enriched in low complexity; that stretch reads SQSSEASTSSVAAPV. Residues 1348 to 1367 show a composition bias toward acidic residues; that stretch reads DDDDDDWGSEKGSDDEDSDD. A compositionally biased stretch (pro residues) spans 1412 to 1495; that stretch reads SSPPPPPAPV…PPPGGAPAPS (84 aa). A WH2 domain is found at 1500–1517; that stretch reads RPAGLLGEIQAGRALKKT.

This sequence belongs to the PAN1 family. In terms of assembly, component of the PAN1 actin cytoskeleton-regulatory complex.

The protein localises to the cell membrane. Its subcellular location is the endosome membrane. The protein resides in the cytoplasm. It localises to the cytoskeleton. It is found in the actin patch. Component of the PAN1 actin cytoskeleton-regulatory complex required for the internalization of endosomes during actin-coupled endocytosis. The complex links the site of endocytosis to the cell membrane-associated actin cytoskeleton. Mediates uptake of external molecules and vacuolar degradation of plasma membrane proteins. Plays a role in the proper organization of the cell membrane-associated actin cytoskeleton and promotes its destabilization. In Neurospora crassa (strain ATCC 24698 / 74-OR23-1A / CBS 708.71 / DSM 1257 / FGSC 987), this protein is Actin cytoskeleton-regulatory complex protein pan-1 (pan-1).